A 349-amino-acid chain; its full sequence is Mitochondrial carrier protein SCaMC-3L (349 aa).

A run of 4 helical transmembrane segments spans residues 88-104 (GALW…GAVS), 149-168 (GNGI…FSVF), 188-205 (LLAG…INPM), and 243-261 (YLPN…LAVY). 2 Solcar repeats span residues 88 to 174 (GALW…CKNY) and 182 to 267 (PPFQ…LNCL).

Belongs to the mitochondrial carrier (TC 2.A.29) family.

The protein resides in the mitochondrion inner membrane. The enzyme catalyses Mg(2+)(out) + phosphate(in) + ATP(out) = Mg(2+)(in) + phosphate(out) + ATP(in). It catalyses the reaction ADP(out) + phosphate(in) + H(+)(out) = ADP(in) + phosphate(out) + H(+)(in). In terms of biological role, calcium-independent ATP-Mg/Pi exchanger that catalyzes the electroneutral exchange of Mg-ATP or free ADP against an hydrogenphosphate and participates in the net transport of adenine nucleotides across the mitochondria inner membrane. The protein is Mitochondrial carrier protein SCaMC-3L of Bos taurus (Bovine).